A 506-amino-acid polypeptide reads, in one-letter code: MSGKVDKKKGSSVKKTEGKSKEISALAAKIRAKALENQKKMLKNSETTSDQEDDPSESEEEEGSDSEDVEVSKDKQEEEEEGETFESFSDLDLVPELIEACKNLNFAKPTPIQARSIPPALQGHDIIGLAQTGSGKTAAFAIPILNRLWHDQQPYYACILAPTRELAQQIKETFDSLGSLMGVRSACIVGGMNMMDQARDLMRKPHIIIATPGRLMDHLENTRGFSLRKLKFLVMDEADRLLDMEFGPVLDRILKIIPTQGRTTYLFSATMTSKIDKLQRASLTNPVKCAVSNKYQTVDTLVQTLIVVPGGLKNTYLIYLMNEFIGKTIIVFTRTKANAERITTLANLLEFSATALHGDLNQNQRTGSLDLFKAGRRSILVATDVAARGLDIPSVDIVINYDIPVDSKSYIHRVGRTARAGRSGKSISLVSQYDLELILRIEDVLGKKLPKENVNKDAILTLRDSVDKANGEVVMELNRRNKEKIARGKGRRGRMAARDDMDKGER.

Disordered regions lie at residues 1–22 and 37–88; these read MSGKVDKKKGSSVKKTEGKSKE and NQKK…FESF. The segment covering 49–69 has biased composition (acidic residues); it reads SDQEDDPSESEEEEGSDSEDV. Positions 86–114 match the Q motif motif; sequence ESFSDLDLVPELIEACKNLNFAKPTPIQA. The Helicase ATP-binding domain occupies 117–289; sequence IPPALQGHDI…RASLTNPVKC (173 aa). 130 to 137 provides a ligand contact to ATP; sequence AQTGSGKT. The DEAD box signature appears at 236-239; the sequence is DEAD. The Helicase C-terminal domain occupies 312-460; sequence LKNTYLIYLM…KENVNKDAIL (149 aa). The segment at 485–506 is disordered; the sequence is IARGKGRRGRMAARDDMDKGER. Residues 496-506 show a composition bias toward basic and acidic residues; the sequence is AARDDMDKGER.

This sequence belongs to the DEAD box helicase family. DDX47/RRP3 subfamily. In terms of assembly, interacts with the SSU processome.

It is found in the nucleus. It carries out the reaction ATP + H2O = ADP + phosphate + H(+). In terms of biological role, ATP-dependent rRNA helicase required for pre-ribosomal RNA processing. Involved in the maturation of the 35S-pre-rRNA and to its cleavage to mature 18S rRNA. The chain is ATP-dependent rRNA helicase RRP3 from Vanderwaltozyma polyspora (strain ATCC 22028 / DSM 70294 / BCRC 21397 / CBS 2163 / NBRC 10782 / NRRL Y-8283 / UCD 57-17) (Kluyveromyces polysporus).